A 300-amino-acid polypeptide reads, in one-letter code: Probable mitochondrial 2-oxodicarboxylate carrier (300 aa).

The interval 1 to 20 (MTSKGNAGNPPTPTPAPVKS) is disordered. 3 Solcar repeats span residues 21-104 (QPLW…YEKQ), 114-200 (PTQM…IKSA), and 209-295 (GVLV…VMKL). Transmembrane regions (helical) follow at residues 27–47 (LVSG…LDVV), 74–93 (LKMY…KRAI), 120–140 (IGSG…FELV), 171–191 (GFFK…GGYF), 209–229 (GVLV…TMLN), and 278–298 (LGPG…LLAG).

The protein belongs to the mitochondrial carrier (TC 2.A.29) family.

The protein resides in the mitochondrion inner membrane. The enzyme catalyses 2-oxoadipate(in) + 2-oxoglutarate(out) = 2-oxoadipate(out) + 2-oxoglutarate(in). The catalysed reaction is hexanedioate(in) + 2-oxoglutarate(out) = hexanedioate(out) + 2-oxoglutarate(in). It catalyses the reaction L-2-aminoadipate(in) + 2-oxoglutarate(out) = L-2-aminoadipate(out) + 2-oxoglutarate(in). It carries out the reaction glutarate(in) + 2-oxoglutarate(out) = glutarate(out) + 2-oxoglutarate(in). The enzyme catalyses 2-oxoheptanedioate(in) + 2-oxoglutarate(out) = 2-oxoheptanedioate(out) + 2-oxoglutarate(in). The catalysed reaction is heptanedioate(in) + 2-oxoglutarate(out) = heptanedioate(out) + 2-oxoglutarate(in). It catalyses the reaction citrate(in) + 2-oxoglutarate(out) = citrate(out) + 2-oxoglutarate(in). Transports dicarboxylates across the inner membranes of mitochondria by a counter-exchange mechanism. Can transport 2-oxoadipate (2-oxohexanedioate), 2-oxoglutarate, adipate (hexanedioate), glutarate, and to a lesser extent, pimelate (heptanedioate), 2-oxopimelate (2-oxoheptanedioate), 2-aminoadipate (2-aminohexanedioate), oxaloacetate, and citrate. Plays a central role in catabolism of lysine, hydroxylysine, and tryptophan, by transporting common metabolite intermediates (such as 2-oxoadipate) into the mitochondria, where it is converted into acetyl-CoA and can enter the citric acid (TCA) cycle. The protein is Probable mitochondrial 2-oxodicarboxylate carrier (mcfT) of Dictyostelium discoideum (Social amoeba).